Here is a 217-residue protein sequence, read N- to C-terminus: Probable transaldolase (217 aa).

Lys-83 serves as the catalytic Schiff-base intermediate with substrate.

It belongs to the transaldolase family. Type 3B subfamily.

It is found in the cytoplasm. The catalysed reaction is D-sedoheptulose 7-phosphate + D-glyceraldehyde 3-phosphate = D-erythrose 4-phosphate + beta-D-fructose 6-phosphate. The protein operates within carbohydrate degradation; pentose phosphate pathway; D-glyceraldehyde 3-phosphate and beta-D-fructose 6-phosphate from D-ribose 5-phosphate and D-xylulose 5-phosphate (non-oxidative stage): step 2/3. In terms of biological role, transaldolase is important for the balance of metabolites in the pentose-phosphate pathway. The protein is Probable transaldolase of Caulobacter vibrioides (strain NA1000 / CB15N) (Caulobacter crescentus).